A 351-amino-acid chain; its full sequence is Beta-hexosaminidase (351 aa).

Substrate is bound by residues Asp-62, Arg-70, Arg-133, and 163–164 (KH). His-176 serves as the catalytic Proton donor/acceptor. The Nucleophile role is filled by Asp-248.

It belongs to the glycosyl hydrolase 3 family. NagZ subfamily. In terms of assembly, monomer.

It is found in the cytoplasm. The catalysed reaction is Hydrolysis of terminal non-reducing N-acetyl-D-hexosamine residues in N-acetyl-beta-D-hexosaminides.. It functions in the pathway cell wall biogenesis; peptidoglycan recycling. In terms of biological role, plays a role in peptidoglycan recycling by cleaving the terminal beta-1,4-linked N-acetylglucosamine (GlcNAc) from peptide-linked peptidoglycan fragments, giving rise to free GlcNAc, anhydro-N-acetylmuramic acid and anhydro-N-acetylmuramic acid-linked peptides. The sequence is that of Beta-hexosaminidase from Haemophilus influenzae (strain ATCC 51907 / DSM 11121 / KW20 / Rd).